A 193-amino-acid polypeptide reads, in one-letter code: Auxin-responsive protein IAA23 (193 aa).

Polar residues predominate over residues 1–12 (MSTSSGADSSPP). Positions 1–66 (MSTSSGADSS…SPKARAVGWP (66 aa)) are disordered. The span at 21–36 (TALTLALPGSSSSSSS) shows a compositional bias: low complexity. An EAR-like (transcriptional repression) motif is present at residues 23-27 (LTLAL). Residues 39-53 (DPERKRAAHADHADA) show a composition bias toward basic and acidic residues. The PB1 domain maps to 83–191 (AKLVKVAVDG…EAVNLSPRRS (109 aa)).

Belongs to the Aux/IAA family. As to quaternary structure, homodimers and heterodimers. As to expression, highly expressed in roots. Expressed in seedlings.

It is found in the nucleus. Aux/IAA proteins are short-lived transcriptional factors that function as repressors of early auxin response genes at low auxin concentrations. The polypeptide is Auxin-responsive protein IAA23 (IAA23) (Oryza sativa subsp. japonica (Rice)).